The following is a 336-amino-acid chain: N-lysine methyltransferase KMT5A (336 aa).

A disordered region spans residues 1-112 (MGRGKKMSKP…KPSEQRETEC (112 aa)). A compositionally biased stretch (basic and acidic residues) spans 67–93 (SVAHHESKCPGKPLTETRKKAEVEKKR). The SET domain occupies 200–321 (EGMKMDMITG…VGEELLYDYG (122 aa)). Residues 210-212 (KGR), Tyr-255, and 282-283 (NH) contribute to the S-adenosyl-L-methionine site.

Belongs to the class V-like SAM-binding methyltransferase superfamily. Histone-lysine methyltransferase family. PR/SET subfamily.

It is found in the nucleus. The protein localises to the chromosome. It catalyses the reaction L-lysyl(20)-[histone H4] + S-adenosyl-L-methionine = N(6)-methyl-L-lysyl(20)-[histone H4] + S-adenosyl-L-homocysteine + H(+). The enzyme catalyses L-lysyl-[protein] + S-adenosyl-L-methionine = N(6)-methyl-L-lysyl-[protein] + S-adenosyl-L-homocysteine + H(+). In terms of biological role, protein-lysine N-methyltransferase that monomethylates both histones and non-histone proteins. Specifically monomethylates 'Lys-20' of histone H4 (H4K20me1). H4K20me1 is enriched during mitosis and represents a specific tag for epigenetic transcriptional repression. Mainly functions in euchromatin regions, thereby playing a central role in the silencing of euchromatic genes. Required for cell proliferation, probably by contributing to the maintenance of proper higher-order structure of DNA during mitosis. Involved in chromosome condensation and proper cytokinesis. Nucleosomes are preferred as substrate compared to free histones. Mediates monomethylation of p53/TP53 at 'Lys-382', leading to repress p53/TP53-target genes. Plays a negative role in TGF-beta response regulation and a positive role in cell migration. The chain is N-lysine methyltransferase KMT5A from Xenopus tropicalis (Western clawed frog).